The primary structure comprises 68 residues: Sec-independent protein translocase protein TatA (68 aa).

The chain crosses the membrane as a helical span at residues 1–21 (MGSFSIWHWLIVLAVVLLLFG). The segment at 42–68 (GMGDDEVASADKSVDGKTVDHKSDEVR) is disordered. Residues 53–68 (KSVDGKTVDHKSDEVR) show a composition bias toward basic and acidic residues.

This sequence belongs to the TatA/E family. In terms of assembly, the Tat system comprises two distinct complexes: a TatABC complex, containing multiple copies of TatA, TatB and TatC subunits, and a separate TatA complex, containing only TatA subunits. Substrates initially bind to the TatABC complex, which probably triggers association of the separate TatA complex to form the active translocon.

The protein localises to the cell inner membrane. Functionally, part of the twin-arginine translocation (Tat) system that transports large folded proteins containing a characteristic twin-arginine motif in their signal peptide across membranes. TatA could form the protein-conducting channel of the Tat system. This is Sec-independent protein translocase protein TatA from Rhizobium meliloti (strain 1021) (Ensifer meliloti).